We begin with the raw amino-acid sequence, 205 residues long: Probable molybdenum cofactor guanylyltransferase (205 aa).

Residues 9-11, K21, D66, and D95 contribute to the GTP site; that span reads LAG. D95 contributes to the Mg(2+) binding site.

It belongs to the MobA family. Mg(2+) is required as a cofactor.

It is found in the cytoplasm. It carries out the reaction Mo-molybdopterin + GTP + H(+) = Mo-molybdopterin guanine dinucleotide + diphosphate. Transfers a GMP moiety from GTP to Mo-molybdopterin (Mo-MPT) cofactor (Moco or molybdenum cofactor) to form Mo-molybdopterin guanine dinucleotide (Mo-MGD) cofactor. This Pelotomaculum thermopropionicum (strain DSM 13744 / JCM 10971 / SI) protein is Probable molybdenum cofactor guanylyltransferase.